We begin with the raw amino-acid sequence, 1386 residues long: Adhesin AWP3b (1386 aa).

An N-terminal signal peptide occupies residues 1-19 (MISFVTLLAILGLLSISWA). 3 disulfide bridges follow: Cys115-Cys145, Cys144-Cys178, and Cys304-Cys341. Asn117 carries an N-linked (GlcNAc...) asparagine glycan. 4 N-linked (GlcNAc...) asparagine glycosylation sites follow: Asn315, Asn345, Asn468, and Asn526. The segment at 429–507 (TTDSPGHTIT…SSPTSDFSSV (79 aa)) is disordered. Disordered regions lie at residues 530 to 553 (IVDSSSSSASSLPSSMSSSLSSSM) and 612 to 690 (TTDS…FSSV). Asn651 and Asn709 each carry an N-linked (GlcNAc...) asparagine glycan. Disordered regions lie at residues 714–739 (VDSSSSSASSLPSSMPSSLPSSMSSS) and 795–873 (TTDS…FSSV). N-linked (GlcNAc...) asparagine glycosylation is found at Asn834, Asn898, Asn1008, Asn1017, and Asn1096. The interval 1000-1032 (TIQESELSNTSRTTMTSNSSVSISSTSSRSSFS) is disordered. Composition is skewed to polar residues over residues 1140–1150 (SHPVATNSGDK) and 1159–1177 (QVSTTMTSSGPTPDTSSFD). A disordered region spans residues 1140-1186 (SHPVATNSGDKPTTPKRSEQVSTTMTSSGPTPDTSSFDTDGMSAYSR). A glycan (N-linked (GlcNAc...) asparagine) is linked at Asn1197. A compositionally biased stretch (polar residues) spans 1198–1218 (KSSTSQLGNNKQTFSNLQLES). The interval 1198 to 1227 (KSSTSQLGNNKQTFSNLQLESTRPHSENEV) is disordered. N-linked (GlcNAc...) asparagine glycosylation occurs at Asn1229. Over residues 1241 to 1259 (STYGTNNVNPLSPTGSISI) the composition is skewed to polar residues. The segment at 1241-1269 (STYGTNNVNPLSPTGSISIPLTEDGQGDN) is disordered. N-linked (GlcNAc...) asparagine glycosylation is present at Asn1287.

The protein localises to the secreted. It localises to the cell wall. Its function is as follows. May play a role in cell adhesion. The sequence is that of Adhesin AWP3b from Candida glabrata (strain ATCC 2001 / BCRC 20586 / JCM 3761 / NBRC 0622 / NRRL Y-65 / CBS 138) (Yeast).